Reading from the N-terminus, the 311-residue chain is Ferrochelatase (311 aa).

2 residues coordinate Fe cation: histidine 179 and glutamate 260.

It belongs to the ferrochelatase family.

Its subcellular location is the cytoplasm. The enzyme catalyses heme b + 2 H(+) = protoporphyrin IX + Fe(2+). Its pathway is porphyrin-containing compound metabolism; protoheme biosynthesis; protoheme from protoporphyrin-IX: step 1/1. In terms of biological role, catalyzes the ferrous insertion into protoporphyrin IX. This chain is Ferrochelatase, found in Helicobacter hepaticus (strain ATCC 51449 / 3B1).